Here is a 292-residue protein sequence, read N- to C-terminus: ATP synthase gamma chain (292 aa).

It belongs to the ATPase gamma chain family. As to quaternary structure, F-type ATPases have 2 components, CF(1) - the catalytic core - and CF(0) - the membrane proton channel. CF(1) has five subunits: alpha(3), beta(3), gamma(1), delta(1), epsilon(1). CF(0) has three main subunits: a, b and c.

The protein resides in the cell inner membrane. Produces ATP from ADP in the presence of a proton gradient across the membrane. The gamma chain is believed to be important in regulating ATPase activity and the flow of protons through the CF(0) complex. This chain is ATP synthase gamma chain, found in Hydrogenobaculum sp. (strain Y04AAS1).